The sequence spans 397 residues: MSDVLKSSQERSRKRRLLLAQTLGLSSVDDLKKALGNAEDINSSRQLNSGGQREEEDGGASSSKKTPNEIIYRDSSTFLKGTQSSNPHNDYCQHFVDTGQRPQNFIRDVGLADRFEEYPKLRELIKLKDKLIQDTASAPMYLKADLKSLDVKTLGAKFDVILIEPPLEEYARAAPSVATVGGAPRVFWNWDDILNLDVGEIAAHRSFVFLWCGSSEGLDMGRNCLKKWGFRRCEDICWIRTNINKPGHSKQLEPKAVFQRTKEHCLMGIKGTVRRSTDGDFIHANVDIDLIISEEEEFGSFEKPIEIFHIIEHFCLGRRRLHLFGRDSSIRPGWLTVGPELTNSNFNSELYQTYFAEAPATGCTSRIELLRPKSPPPNSKVLRGRGRGFPRGRGRPR.

2 disordered regions span residues 37-67 (NAEDINSSRQLNSGGQREEEDGGASSSKKTP) and 368-397 (ELLRPKSPPPNSKVLRGRGRGFPRGRGRPR). Residues 40–51 (DINSSRQLNSGG) show a composition bias toward polar residues. Residues 382–397 (LRGRGRGFPRGRGRPR) are compositionally biased toward basic residues.

This sequence belongs to the MT-A70-like family. In terms of assembly, component of the WMM complex, a N6-methyltransferase complex composed of a catalytic subcomplex, named MAC, and of an associated subcomplex, named MACOM. The MAC subcomplex is composed of Ime4/Mettl3 and Mettl14. The MACOM subcomplex is composed of fl(2)d, Flacc/Xio, Hakai, vir, and, in some cases of nito.

The protein localises to the nucleus. Functionally, non-catalytic component of the WMM complex, a complex that mediates N6-methyladenosine (m6A) methylation of mRNAs, a modification that plays a role in the efficiency of mRNA splicing and is required for sex determination. In the heterodimer formed with Ime4/Mettl3, Mettl14 constitutes the RNA-binding scaffold that recognizes the substrate rather than the catalytic core. Required for sex determination and dosage compensation via Sxl alternative splicing: m6A methylation acts as a key regulator of Sxl pre-mRNA and promotes female-specific alternative splicing of Sxl, which determines female physiognomy. M6A methylation is also required for neuronal functions. This is N(6)-adenosine-methyltransferase non-catalytic subunit METTL14 from Drosophila melanogaster (Fruit fly).